The primary structure comprises 1020 residues: MKRFRRHGHESQRDKHKQDLYQFNKTVEHGFPHQPSALGFSPSLELLAIGTRSGAIKLYGAPGVEFMGLHDENAAVTQVHFLPNQVELVTLLEDNSLHMWTLRAHNSMCELLEIGRFTLSGPPGAIPSVTRVTAVLAHSSGELLLLGTEGGHVFVVEVPGFRELEENNISVEDVQNRVPEDYVGRRNLESVETLHENPLNPRQVLIGYSRGLMVLWDLDRQRPVQHFLGTQQLESVWWMEDGESILSSHSDGSYCQWTVTGEDPQTEPEKQETPYGAFPCKAISKIIQLPSKQGPPFLIFSGGMPRASYGDRHCISVIHSKTHEALDFTSRIIDFFVIREGENHKGEPSALVVLVEEELVVVDLQTEGWPVIQTPYLVPLHCSAITCSHHVSSIPLKLWERVQAAGAHQNTHYSRKPWPINGGKNLAPDPPQRDLLLTGHEDGTVRFWDASGVCLYPMYKLSTAGVFHTDADPNDNMNQGSEGEWPPFRKVGCFDPYSDDPRLGIQKIHLCKYSGYLTVAGTAGQILVLELNDEAAEQMVEATVVDLLQGQEGFRWKGQARLDVREEPVLFPPGFQPFALVQCQPPAVVTAIALHSEWKLVGFGTSHGFGLYDYNQRNNIMVKCTLNPSDQMAMEGPLSRVKSIKKSLRQSFRRIRRSRVSMRKHHTNNAAKLQEINARLEAEALQEMELAPVQRKIEARSSDDSFTGLVRTLYFADTFVSDSSHSTPSLWAGTNGGAVFAYVLRVPPQERRAEDPVTAHAAKEIQLMHRAPVVGLVVLDGKGAPLPEPLEVAHDLARSPEMHGSHHLLVVSEEQFKLFTLPKVSSKSKLKLTAVDGSRVRRVGVAWFGSRTDEQLESCLVVLTNQGELHVISLPSIKMLVHYPCIRREDVSGIASCVFTKYGQGFYLISPSEFERFSLSTRWVVQPHCLVEPPLQMRSKSPSSPVHRDLPDGVPTEHRNFKGDSEGYENSARQVMEHALLNDESVLQEIQKSLEGDQTTFLENNLKTKPKAGNVLSNGD.

14 WD repeats span residues 36–69 (SALG…FMGL), 76–117 (VTQV…IGRF), 132–169 (VTAV…ENNI), 193–227 (TLHE…VQHF), 233–264 (LESV…GEDP), 282–324 (AISK…KTHE), 332–364 (IIDF…VVDL), 386–462 (TCSH…YKLS), 506–581 (QKIH…FALV), 590–651 (TAIA…LRQS), 710–766 (VRTL…KEIQ), 775–827 (GLVV…VSSK), 832–884 (LTAV…VHYP), and 898–921 (VFTK…SLST). The disordered stretch occupies residues 935-968 (LQMRSKSPSSPVHRDLPDGVPTEHRNFKGDSEGY). Residues 946–965 (VHRDLPDGVPTEHRNFKGDS) show a composition bias toward basic and acidic residues.

Belongs to the WD repeat L(2)GL family. In terms of processing, phosphorylated.

The protein localises to the cytoplasm. It localises to the cytoskeleton. Functionally, essential for hemidesmosome formation and maintenance of the cytoskeleton elements as well as cellular morphology in the basal epidermis during development. Also involved in regulating growth of the basal epidermis. This is LLGL scribble cell polarity complex component 2 (llgl2) from Danio rerio (Zebrafish).